The following is a 199-amino-acid chain: Thymidylate kinase (199 aa).

7 to 14 serves as a coordination point for ATP; sequence GIDGSGKT.

Belongs to the thymidylate kinase family.

The enzyme catalyses dTMP + ATP = dTDP + ADP. Functionally, phosphorylation of dTMP to form dTDP in both de novo and salvage pathways of dTTP synthesis. This chain is Thymidylate kinase, found in Tropheryma whipplei (strain Twist) (Whipple's bacillus).